The following is a 552-amino-acid chain: Methyl-coenzyme M reductase II subunit alpha (552 aa).

Residue Gln150 coordinates coenzyme F430. Residues Arg228, Lys259–His260, and Arg273 each bind coenzyme B. Coenzyme M-binding residues include Tyr335 and Tyr446.

The protein belongs to the methyl-coenzyme M reductase alpha subunit family. As to quaternary structure, MCR is a hexamer of two alpha, two beta, and two gamma chains, forming a dimer of heterotrimers. Coenzyme F430 is required as a cofactor.

It carries out the reaction coenzyme B + methyl-coenzyme M = methane + coenzyme M-coenzyme B heterodisulfide. It functions in the pathway one-carbon metabolism; methyl-coenzyme M reduction; methane from methyl-coenzyme M: step 1/1. Functionally, component of the methyl-coenzyme M reductase (MCR) I that catalyzes the reductive cleavage of methyl-coenzyme M (CoM-S-CH3 or 2-(methylthio)ethanesulfonate) using coenzyme B (CoB or 7-mercaptoheptanoylthreonine phosphate) as reductant which results in the production of methane and the mixed heterodisulfide of CoB and CoM (CoM-S-S-CoB). This is the final step in methanogenesis. The chain is Methyl-coenzyme M reductase II subunit alpha (mrtA) from Methanocaldococcus jannaschii (strain ATCC 43067 / DSM 2661 / JAL-1 / JCM 10045 / NBRC 100440) (Methanococcus jannaschii).